We begin with the raw amino-acid sequence, 592 residues long: A-type ATP synthase subunit A (592 aa).

231–238 (GGFGTGKT) serves as a coordination point for ATP.

Belongs to the ATPase alpha/beta chains family. In terms of assembly, has multiple subunits with at least A(3), B(3), C, D, E, F, H, I and proteolipid K(x).

The protein localises to the cell membrane. The catalysed reaction is ATP + H2O + 4 H(+)(in) = ADP + phosphate + 5 H(+)(out). Component of the A-type ATP synthase that produces ATP from ADP in the presence of a proton gradient across the membrane. The A chain is the catalytic subunit. This Staphylothermus marinus (strain ATCC 43588 / DSM 3639 / JCM 9404 / F1) protein is A-type ATP synthase subunit A.